The primary structure comprises 387 residues: 3-ketoacyl-CoA thiolase (387 aa).

The active-site Acyl-thioester intermediate is Cys91. Residues His343 and Cys373 each act as proton acceptor in the active site.

Belongs to the thiolase-like superfamily. Thiolase family. In terms of assembly, heterotetramer of two alpha chains (FadB) and two beta chains (FadA).

It localises to the cytoplasm. The enzyme catalyses an acyl-CoA + acetyl-CoA = a 3-oxoacyl-CoA + CoA. It participates in lipid metabolism; fatty acid beta-oxidation. Catalyzes the final step of fatty acid oxidation in which acetyl-CoA is released and the CoA ester of a fatty acid two carbons shorter is formed. This is 3-ketoacyl-CoA thiolase from Cronobacter sakazakii (strain ATCC BAA-894) (Enterobacter sakazakii).